Reading from the N-terminus, the 288-residue chain is tRNA pseudouridine synthase A (288 aa).

The active-site Nucleophile is aspartate 59. Residue tyrosine 134 coordinates substrate.

Belongs to the tRNA pseudouridine synthase TruA family. In terms of assembly, homodimer.

It carries out the reaction uridine(38/39/40) in tRNA = pseudouridine(38/39/40) in tRNA. Its function is as follows. Formation of pseudouridine at positions 38, 39 and 40 in the anticodon stem and loop of transfer RNAs. The sequence is that of tRNA pseudouridine synthase A from Leifsonia xyli subsp. xyli (strain CTCB07).